We begin with the raw amino-acid sequence, 61 residues long: MAKLRITQIRSGIGGTHNQRATLRTLGLRKINATTVRDDRPEVRGMIRTVTHLVRVEEVDS.

Belongs to the universal ribosomal protein uL30 family. As to quaternary structure, part of the 50S ribosomal subunit.

The polypeptide is Large ribosomal subunit protein uL30 (Frankia alni (strain DSM 45986 / CECT 9034 / ACN14a)).